The following is a 190-amino-acid chain: Elongation factor P-like protein (190 aa).

This sequence belongs to the elongation factor P family.

The sequence is that of Elongation factor P-like protein from Yersinia pestis bv. Antiqua (strain Antiqua).